The primary structure comprises 328 residues: Ketol-acid reductoisomerase (NADP(+)) (328 aa).

The 181-residue stretch at 2–182 (AKIYRDGDAS…GATRAGVIET (181 aa)) folds into the KARI N-terminal Rossmann domain. Residues 25 to 28 (YGIQ), R48, S53, and 83 to 86 (DMEQ) contribute to the NADP(+) site. H108 is a catalytic residue. G134 provides a ligand contact to NADP(+). The KARI C-terminal knotted domain maps to 183–328 (TFAEETETDL…AEMRKLLFGP (146 aa)). D191, E195, E227, and E231 together coordinate Mg(2+). S252 lines the substrate pocket.

This sequence belongs to the ketol-acid reductoisomerase family. Mg(2+) serves as cofactor.

The catalysed reaction is (2R)-2,3-dihydroxy-3-methylbutanoate + NADP(+) = (2S)-2-acetolactate + NADPH + H(+). It catalyses the reaction (2R,3R)-2,3-dihydroxy-3-methylpentanoate + NADP(+) = (S)-2-ethyl-2-hydroxy-3-oxobutanoate + NADPH + H(+). Its pathway is amino-acid biosynthesis; L-isoleucine biosynthesis; L-isoleucine from 2-oxobutanoate: step 2/4. The protein operates within amino-acid biosynthesis; L-valine biosynthesis; L-valine from pyruvate: step 2/4. In terms of biological role, involved in the biosynthesis of branched-chain amino acids (BCAA). Catalyzes an alkyl-migration followed by a ketol-acid reduction of (S)-2-acetolactate (S2AL) to yield (R)-2,3-dihydroxy-isovalerate. In the isomerase reaction, S2AL is rearranged via a Mg-dependent methyl migration to produce 3-hydroxy-3-methyl-2-ketobutyrate (HMKB). In the reductase reaction, this 2-ketoacid undergoes a metal-dependent reduction by NADPH to yield (R)-2,3-dihydroxy-isovalerate. In Pyrobaculum calidifontis (strain DSM 21063 / JCM 11548 / VA1), this protein is Ketol-acid reductoisomerase (NADP(+)).